A 107-amino-acid chain; its full sequence is uncharacterized protein (107 aa).

The Glutaredoxin domain occupies 6–107; it reads KARIDQLVTA…QEMLEVALAS (102 aa). A glutathione-binding site is contributed by lysine 23. Residue cysteine 31 coordinates [2Fe-2S] cluster. Glutathione-binding positions include arginine 60 and 85 to 86; that span reads SD.

This sequence belongs to the glutaredoxin family. Monothiol subfamily.

This is an uncharacterized protein from Synechocystis sp. (strain ATCC 27184 / PCC 6803 / Kazusa).